A 271-amino-acid polypeptide reads, in one-letter code: Aspartate/glutamate leucyltransferase (271 aa).

The protein belongs to the R-transferase family. Bpt subfamily.

It is found in the cytoplasm. It carries out the reaction N-terminal L-glutamyl-[protein] + L-leucyl-tRNA(Leu) = N-terminal L-leucyl-L-glutamyl-[protein] + tRNA(Leu) + H(+). The enzyme catalyses N-terminal L-aspartyl-[protein] + L-leucyl-tRNA(Leu) = N-terminal L-leucyl-L-aspartyl-[protein] + tRNA(Leu) + H(+). Its function is as follows. Functions in the N-end rule pathway of protein degradation where it conjugates Leu from its aminoacyl-tRNA to the N-termini of proteins containing an N-terminal aspartate or glutamate. The protein is Aspartate/glutamate leucyltransferase of Acinetobacter baylyi (strain ATCC 33305 / BD413 / ADP1).